A 127-amino-acid polypeptide reads, in one-letter code: Large ribosomal subunit protein bL17 (127 aa).

This sequence belongs to the bacterial ribosomal protein bL17 family. In terms of assembly, part of the 50S ribosomal subunit. Contacts protein L32.

In Xanthomonas campestris pv. campestris (strain 8004), this protein is Large ribosomal subunit protein bL17.